The chain runs to 152 residues: Ribosome maturation factor RimP (152 aa).

Belongs to the RimP family.

The protein resides in the cytoplasm. Functionally, required for maturation of 30S ribosomal subunits. This is Ribosome maturation factor RimP from Burkholderia ambifaria (strain MC40-6).